A 156-amino-acid polypeptide reads, in one-letter code: Ribonuclease H (156 aa).

The RNase H type-1 domain maps to 3–144 (ELKLIHIFTD…CDVLARTAAE (142 aa)). Residues Asp-12, Glu-50, Asp-72, and Asp-136 each contribute to the Mg(2+) site.

This sequence belongs to the RNase H family. In terms of assembly, monomer. The cofactor is Mg(2+).

Its subcellular location is the cytoplasm. The enzyme catalyses Endonucleolytic cleavage to 5'-phosphomonoester.. In terms of biological role, endonuclease that specifically degrades the RNA of RNA-DNA hybrids. The protein is Ribonuclease H of Shewanella baltica (strain OS223).